Consider the following 61-residue polypeptide: Large ribosomal subunit protein uL30 (61 aa).

The protein belongs to the universal ribosomal protein uL30 family. In terms of assembly, part of the 50S ribosomal subunit.

This chain is Large ribosomal subunit protein uL30, found in Maricaulis maris (strain MCS10) (Caulobacter maris).